The chain runs to 194 residues: A-type ATP synthase subunit E (194 aa).

The protein belongs to the V-ATPase E subunit family. As to quaternary structure, has multiple subunits with at least A(3), B(3), C, D, E, F, H, I and proteolipid K(x).

It is found in the cell membrane. Its function is as follows. Component of the A-type ATP synthase that produces ATP from ADP in the presence of a proton gradient across the membrane. This Saccharolobus solfataricus (strain ATCC 35092 / DSM 1617 / JCM 11322 / P2) (Sulfolobus solfataricus) protein is A-type ATP synthase subunit E.